The primary structure comprises 205 residues: Glycerol-3-phosphate acyltransferase (205 aa).

The next 5 helical transmembrane spans lie at S6 to V26, K55 to V75, V89 to V109, I120 to A140, and A162 to I182.

This sequence belongs to the PlsY family. In terms of assembly, probably interacts with PlsX.

The protein resides in the cell inner membrane. The catalysed reaction is an acyl phosphate + sn-glycerol 3-phosphate = a 1-acyl-sn-glycero-3-phosphate + phosphate. The protein operates within lipid metabolism; phospholipid metabolism. Its function is as follows. Catalyzes the transfer of an acyl group from acyl-phosphate (acyl-PO(4)) to glycerol-3-phosphate (G3P) to form lysophosphatidic acid (LPA). This enzyme utilizes acyl-phosphate as fatty acyl donor, but not acyl-CoA or acyl-ACP. This Herminiimonas arsenicoxydans protein is Glycerol-3-phosphate acyltransferase.